The chain runs to 299 residues: MGAPKQRWTPEEEAALKAGVAKHGPGKWRTILRDSDFSALLRLRSNVDLKDKWRNLSVTAGGYGSREKARMALKKGRRVVPKLTAEPMDVDVKDMDDAHDTAIDVEPLAMAFESLPTEESPDKSVARLDDLILEAIRKLKEPSGPSKAAIAAYIEDQYWPPADFQRLLSTKLKALVNSGKLIKVNQKYRIAPSPPPSGRIGTKVSSAEGMKAENNNAKRLTKHQVIAELEKMKGMTKEEAAAFAAKAVAEAEVAIAEAEEAARVAEAAENDAEAAKAFLDAVTLSMRNRNAASMMLRAC.

One can recognise an HTH myb-type domain in the interval 1–61 (MGAPKQRWTP…KWRNLSVTAG (61 aa)). Positions 28–57 (WRTILRDSDFSALLRLRSNVDLKDKWRNLS) form a DNA-binding region, H-T-H motif. Positions 124 to 192 (SVARLDDLIL…KVNQKYRIAP (69 aa)) constitute an H15 domain. Residues 238 to 279 (EEAAAFAAKAVAEAEVAIAEAEEAARVAEAAENDAEAAKAFL) adopt a coiled-coil conformation.

It belongs to the histone H1/H5 family. SMH subfamily. Forms a homodimer and heterodimers. In terms of tissue distribution, expressed in leaves.

It localises to the nucleus. The protein localises to the chromosome. It is found in the nucleolus. Its subcellular location is the telomere. Functionally, binds preferentially double-stranded telomeric repeats 5'-TTTAGGG-3', but can also bind to the single G-rich and C-rich telomeric strand. The sequence is that of Single myb histone 1 (SMH1) from Zea mays (Maize).